The sequence spans 237 residues: Large ribosomal subunit protein uL1 (237 aa).

This sequence belongs to the universal ribosomal protein uL1 family. As to quaternary structure, part of the 50S ribosomal subunit.

In terms of biological role, binds directly to 23S rRNA. The L1 stalk is quite mobile in the ribosome, and is involved in E site tRNA release. Its function is as follows. Protein L1 is also a translational repressor protein, it controls the translation of the L11 operon by binding to its mRNA. This chain is Large ribosomal subunit protein uL1, found in Dehalococcoides mccartyi (strain ATCC BAA-2266 / KCTC 15142 / 195) (Dehalococcoides ethenogenes (strain 195)).